A 273-amino-acid polypeptide reads, in one-letter code: 2-dehydro-3-deoxyphosphooctonate aldolase (273 aa).

This sequence belongs to the KdsA family.

The protein localises to the cytoplasm. It carries out the reaction D-arabinose 5-phosphate + phosphoenolpyruvate + H2O = 3-deoxy-alpha-D-manno-2-octulosonate-8-phosphate + phosphate. Its pathway is carbohydrate biosynthesis; 3-deoxy-D-manno-octulosonate biosynthesis; 3-deoxy-D-manno-octulosonate from D-ribulose 5-phosphate: step 2/3. The protein operates within bacterial outer membrane biogenesis; lipopolysaccharide biosynthesis. The sequence is that of 2-dehydro-3-deoxyphosphooctonate aldolase from Cyanothece sp. (strain PCC 7425 / ATCC 29141).